We begin with the raw amino-acid sequence, 410 residues long: Cytochrome P450 (410 aa).

Cys-359 is a heme binding site.

It belongs to the cytochrome P450 family. The cofactor is heme.

This is Cytochrome P450 (cypA) from Bacillus subtilis (strain 168).